Reading from the N-terminus, the 317-residue chain is Brain-specific serine protease 4 (317 aa).

Positions 1 to 32 (MVVSGAPPALGGGCLGTFTSLLLLASTAILNA) are cleaved as a signal peptide. Residues 50-290 (VVGGEDSTDS…HRSWVEKIVQ (241 aa)) form the Peptidase S1 domain. Residue asparagine 70 is glycosylated (N-linked (GlcNAc...) asparagine). An intrachain disulfide couples cysteine 75 to cysteine 91. Residues histidine 90 and aspartate 141 each act as charge relay system in the active site. 3 cysteine pairs are disulfide-bonded: cysteine 175-cysteine 248, cysteine 208-cysteine 227, and cysteine 238-cysteine 266. Catalysis depends on serine 242, which acts as the Charge relay system.

This sequence belongs to the peptidase S1 family. Expressed abundantly in the epithelial cells of the airways, including trachea, esophagus and fetal lung. Scarce in adult lung. Expressed at low levels in placenta, pancreas, prostate and thyroid gland.

Its subcellular location is the secreted. In terms of biological role, preferentially cleaves the synthetic substrate H-D-Leu-Thr-Arg-pNA compared to tosyl-Gly-Pro-Arg-pNA. The polypeptide is Brain-specific serine protease 4 (PRSS22) (Homo sapiens (Human)).